Consider the following 429-residue polypeptide: Serine hydroxymethyltransferase (429 aa).

(6S)-5,6,7,8-tetrahydrofolate-binding positions include leucine 126 and 130-132 (GHL). At lysine 235 the chain carries N6-(pyridoxal phosphate)lysine. 359–361 (SPF) contacts (6S)-5,6,7,8-tetrahydrofolate.

It belongs to the SHMT family. In terms of assembly, homodimer. Pyridoxal 5'-phosphate serves as cofactor.

It is found in the cytoplasm. It catalyses the reaction (6R)-5,10-methylene-5,6,7,8-tetrahydrofolate + glycine + H2O = (6S)-5,6,7,8-tetrahydrofolate + L-serine. It participates in one-carbon metabolism; tetrahydrofolate interconversion. The protein operates within amino-acid biosynthesis; glycine biosynthesis; glycine from L-serine: step 1/1. Its function is as follows. Catalyzes the reversible interconversion of serine and glycine with tetrahydrofolate (THF) serving as the one-carbon carrier. This reaction serves as the major source of one-carbon groups required for the biosynthesis of purines, thymidylate, methionine, and other important biomolecules. Also exhibits THF-independent aldolase activity toward beta-hydroxyamino acids, producing glycine and aldehydes, via a retro-aldol mechanism. This Parasynechococcus marenigrum (strain WH8102) protein is Serine hydroxymethyltransferase.